The following is a 149-amino-acid chain: Large ribosomal subunit protein uL13 (149 aa).

It belongs to the universal ribosomal protein uL13 family. In terms of assembly, part of the 50S ribosomal subunit.

This protein is one of the early assembly proteins of the 50S ribosomal subunit, although it is not seen to bind rRNA by itself. It is important during the early stages of 50S assembly. The sequence is that of Large ribosomal subunit protein uL13 from Borrelia duttonii (strain Ly).